Consider the following 195-residue polypeptide: Imidazoleglycerol-phosphate dehydratase (195 aa).

Belongs to the imidazoleglycerol-phosphate dehydratase family.

Its subcellular location is the cytoplasm. It carries out the reaction D-erythro-1-(imidazol-4-yl)glycerol 3-phosphate = 3-(imidazol-4-yl)-2-oxopropyl phosphate + H2O. Its pathway is amino-acid biosynthesis; L-histidine biosynthesis; L-histidine from 5-phospho-alpha-D-ribose 1-diphosphate: step 6/9. The chain is Imidazoleglycerol-phosphate dehydratase from Aromatoleum aromaticum (strain DSM 19018 / LMG 30748 / EbN1) (Azoarcus sp. (strain EbN1)).